Here is a 159-residue protein sequence, read N- to C-terminus: MAKVDVISRVTVLAEQVISSLGMELVDLEYKREGREMVLRLFVDKEGGVNLDDCASVSRELSEVLDVEDVISEHYSLEVSSPGIDRPLKKVEDFQRFKGRLVKIRTFEPLPDDAGNKRKTFLGELKGIENGVVLVALKEGQNAAIPFEKVAKANLEFEF.

This sequence belongs to the RimP family.

It localises to the cytoplasm. In terms of biological role, required for maturation of 30S ribosomal subunits. The polypeptide is Ribosome maturation factor RimP (Geotalea uraniireducens (strain Rf4) (Geobacter uraniireducens)).